The chain runs to 746 residues: Protein Niban 2 (746 aa).

The N-myristoyl glycine moiety is linked to residue G2. The PH domain maps to 68–192; sequence RIVFSGNLFQ…WQAVLQDCIR (125 aa). Phosphoserine is present on residues S568, S574, S601, and S603. Residues 590-746 are disordered; it reads GEEYSNSGGG…EDSAGVQTEF (157 aa). The residue at position 606 (T606) is a Phosphothreonine. Phosphoserine occurs at positions 609, 624, 638, 641, 646, 665, 681, 692, and 696. A compositionally biased stretch (low complexity) spans 671 to 693; it reads PLLNGAPAGESPQPKAAPEASSP. A compositionally biased stretch (polar residues) spans 720 to 746; it reads GEQVSSPSSHPALHTTTEDSAGVQTEF.

It belongs to the Niban family. In terms of processing, phosphorylated at Ser-641, Ser-646, Ser-692 and Ser-696 by the BRAF/MKK/ERK signaling cascade. In melanoma cells, the C-terminal phosphorylation may prevent targeting to the plasma membrane. As apoptosis proceeds, degraded via an proteasome-independent pathway, probably by caspases.

The protein resides in the cytoplasm. Its subcellular location is the cytosol. It is found in the cell junction. It localises to the adherens junction. The protein localises to the membrane. Its function is as follows. May play a role in apoptosis suppression. May promote melanoma cell invasion in vitro. This is Protein Niban 2 from Homo sapiens (Human).